The chain runs to 516 residues: Cysteine--tRNA ligase (516 aa).

C32 contacts Zn(2+). Residues 34-44 (PTVYMYAHIGN) carry the 'HIGH' region motif. C230, H255, and E259 together coordinate Zn(2+). The short motif at 287–291 (KMSKS) is the 'KMSKS' region element. An ATP-binding site is contributed by K290.

Belongs to the class-I aminoacyl-tRNA synthetase family. Monomer. Requires Zn(2+) as cofactor.

The protein resides in the cytoplasm. It carries out the reaction tRNA(Cys) + L-cysteine + ATP = L-cysteinyl-tRNA(Cys) + AMP + diphosphate. In Salinibacter ruber (strain DSM 13855 / M31), this protein is Cysteine--tRNA ligase.